A 2475-amino-acid polypeptide reads, in one-letter code: Non-reducing polyketide synthase ausA (2475 aa).

An N-terminal acylcarrier protein transacylase domain (SAT) region spans residues 14–253 (VLFGSKYSEI…HHADHLSAAQ (240 aa)). A Ketosynthase family 3 (KS3) domain is found at 384-800 (SIPIAVTGLA…GSNAAIVLKE (417 aa)). Residues Cys549, His684, and His723 each act as for beta-ketoacyl synthase activity in the active site. Residues 910 to 1212 (LCFGGQTGNK…CPMDLSGPQA (303 aa)) form a malonyl-CoA:ACP transacylase (MAT) domain region. Ser997 functions as the For acyl/malonyl transferase activity in the catalytic mechanism. An N-terminal hotdog fold region spans residues 1279-1407 (EDLKLVQLLK…GTISLSPGAD (129 aa)). The PKS/mFAS DH domain occupies 1279 to 1586 (EDLKLVQLLK…FTSVSIQSLR (308 aa)). Residues 1282-1585 (KLVQLLKNEG…TFTSVSIQSL (304 aa)) are product template (PT) domain. His1312 acts as the Proton acceptor; for dehydratase activity in catalysis. The tract at residues 1435–1586 (SSSGLKRSTV…FTSVSIQSLR (152 aa)) is C-terminal hotdog fold. The Proton donor; for dehydratase activity role is filled by Asp1493. The Carrier domain maps to 1626-1703 (SSNGDDLRTV…ALVQRIFPGR (78 aa)). Ser1663 is modified (O-(pantetheine 4'-phosphoryl)serine). Residues 1865 to 2098 (QHTSEHKLLH…GFNWVDWTDN (234 aa)) form a methyltransferase (CMeT) domain region. The interval 2127–2475 (SAIHEETVVY…YEFLRSHVGL (349 aa)) is thioesterase (TE) domain. Active-site for thioesterase activity residues include Ser2250, Asp2412, and His2444.

It catalyses the reaction 3 malonyl-CoA + acetyl-CoA + 2 S-adenosyl-L-methionine = 3,5-dimethylorsellinate + 2 S-adenosyl-L-homocysteine + 3 CO2 + 4 CoA. Its pathway is secondary metabolite biosynthesis; terpenoid biosynthesis. Its function is as follows. Non-reducing polyketide synthase; part of the gene cluster A that mediates the biosynthesis of the fungal meroterpenoid acetoxydehydroaustin. The first step of the pathway is the synthesis of 3,5-dimethylorsellinic acid by the polyketide synthase ausA. 3,5-dimethylorsellinic acid is then prenylated by the polyprenyl transferase ausN. Further epoxidation by the FAD-dependent monooxygenase ausM and cyclization by the probable terpene cyclase ausL lead to the formation of protoaustinoid A. Protoaustinoid A is then oxidized to spiro-lactone preaustinoid A3 by the combined action of the FAD-binding monooxygenases ausB and ausC, and the dioxygenase ausE. Acid-catalyzed keto-rearrangement and ring contraction of the tetraketide portion of preaustinoid A3 by ausJ lead to the formation of preaustinoid A4. The aldo-keto reductase ausK, with the help of ausH, is involved in the next step by transforming preaustinoid A4 into isoaustinone which is in turn hydroxylated by the P450 monooxygenase ausI to form austinolide. The cytochrome P450 monooxygenase ausG then modifies austinolide to austinol. Austinol is further acetylated to austin by the O-acetyltransferase ausP, which spontaneously changes to dehydroaustin. The cytochrome P450 monooxygenase then converts dehydroaustin is into 7-dehydrodehydroaustin. The hydroxylation catalyzed by ausR permits the second O-acetyltransferase ausQ to add an additional acetyl group to the molecule, leading to the formation of acetoxydehydroaustin. Due to genetic rearrangements of the clusters and the subsequent loss of some enzymes, the end product of the Penicillium brasilianum austinoid biosynthesis clusters is acetoxydehydroaustin. This is Non-reducing polyketide synthase ausA from Penicillium brasilianum.